Reading from the N-terminus, the 129-residue chain is Ergosterol biosynthetic protein 28 (129 aa).

Transmembrane regions (helical) follow at residues 4-24 (LGYW…FGFF), 46-66 (TFGV…FNLE), 71-91 (YLAT…EYLF), and 96-116 (TIAN…WMLL).

Belongs to the ERG28 family.

The protein resides in the endoplasmic reticulum membrane. The sequence is that of Ergosterol biosynthetic protein 28 from Arabidopsis thaliana (Mouse-ear cress).